The chain runs to 198 residues: MKQPSALSALVEALRVLPGVGPKSAQRMAYHLMQHDREGAERLGRSLLFATEHLQHCEKCNTFTEAQICEVCSDDERDPTLLCVVETPADQIMLEQTMTYRGLYFVLMGRLSPLDGIGPKEIHFDRLVRRASDGVVKEVVLATNFTNEGEATAHYLGQTLKARGLAVTRLARGVPVGGELEYVDAGTIARAMLDRRTM.

The segment at 57–72 adopts a C4-type zinc-finger fold; sequence CEKCNTFTEAQICEVC. Residues 80–175 enclose the Toprim domain; that stretch reads TLLCVVETPA…AVTRLARGVP (96 aa).

The protein belongs to the RecR family.

Functionally, may play a role in DNA repair. It seems to be involved in an RecBC-independent recombinational process of DNA repair. It may act with RecF and RecO. This is Recombination protein RecR from Burkholderia ambifaria (strain MC40-6).